The following is a 1848-amino-acid chain: Cellulose-binding protein A (1848 aa).

Residues 1 to 28 form the signal peptide; it reads MQKKKSLNLLLALMMVFALVLPSIPALA. Positions 29–190 constitute a CBM3 domain; sequence ATSSMSVEFY…GAKVLGTAPG (162 aa). 9 Cohesin domains span residues 291–428, 435–570, 668–801, 810–943, 952–1085, 1094–1227, 1236–1369, 1377–1511, and 1709–1847; these read VTAT…TVTI, MQIS…SVTI, VTAT…SVTI, VKAT…RLTI, and FAVK…SVKV.

In terms of processing, the N-terminus is blocked. Post-translationally, glycosylated.

The protein localises to the secreted. In terms of biological role, binds to cellulose fibers and coordinates cellulase enzymes. This is Cellulose-binding protein A (cbpA) from Clostridium cellulovorans.